Here is a 1177-residue protein sequence, read N- to C-terminus: Tyrosine-protein kinase hopscotch (1177 aa).

Positions 1–41 (MALANGGEDRMDDSSSGRTSLADSASLTNSSLRSGTSSQSI) are disordered. Residues 16–41 (SGRTSLADSASLTNSSLRSGTSSQSI) are compositionally biased toward polar residues. Phosphoserine is present on residues S40 and S321. In terms of domain architecture, FERM spans 46 to 414 (GTIRVFNFTT…IYIRLSSKWM (369 aa)). The SH2; atypical domain occupies 433–539 (HCHGPIGGAY…YRIPASKYDK (107 aa)). Protein kinase domains follow at residues 582-843 (YPDS…AEIL) and 892-1164 (YNME…HPTD). Residues 898 to 906 (IGRGHYGTV) and K926 contribute to the ATP site. The Proton acceptor role is filled by D1014. Y1047 and Y1048 each carry phosphotyrosine; by autocatalysis. A disordered region spans residues 1158-1177 (KVTHPTDGHQSPPNQPTDAE).

The protein belongs to the protein kinase superfamily. Tyr protein kinase family. JAK subfamily. As to quaternary structure, forms a complex with Hsp83 and piwi; probably Hop mediates the interaction between piwi and Hsp83.

It is found in the endomembrane system. It catalyses the reaction L-tyrosyl-[protein] + ATP = O-phospho-L-tyrosyl-[protein] + ADP + H(+). Functionally, tyrosine kinase of the non-receptor type, phosphorylates the marelle protein. Required maternally for the establishment of the normal array of embryonic segments: involved in the control of pair-rule gene transcription in a stripe-specific manner. Together with Hsp83 and piwi, mediates canalization, also known as developmental robustness, likely via epigenetic silencing of existing genetic variants and suppression of transposon-induced new genetic variation. The chain is Tyrosine-protein kinase hopscotch (hop) from Drosophila melanogaster (Fruit fly).